A 139-amino-acid chain; its full sequence is Large ribosomal subunit protein uL16 (139 aa).

It belongs to the universal ribosomal protein uL16 family. Part of the 50S ribosomal subunit.

Functionally, binds 23S rRNA and is also seen to make contacts with the A and possibly P site tRNAs. The chain is Large ribosomal subunit protein uL16 from Microcystis aeruginosa (strain NIES-843 / IAM M-2473).